Reading from the N-terminus, the 95-residue chain is Large ribosomal subunit protein bL27 (95 aa).

Residues 1–9 (MLKMNLQFF) constitute a propeptide that is removed on maturation.

It belongs to the bacterial ribosomal protein bL27 family. Post-translationally, the N-terminus is cleaved by ribosomal processing cysteine protease Prp.

This chain is Large ribosomal subunit protein bL27, found in Lachnoclostridium phytofermentans (strain ATCC 700394 / DSM 18823 / ISDg) (Clostridium phytofermentans).